Here is a 266-residue protein sequence, read N- to C-terminus: Non-structural maintenance of chromosomes element 1 homolog (266 aa).

Residues 1–102 (MQGSTRRMGV…SISKMATDFA (102 aa)) are interaction with NSMCE3. An RING-type; atypical zinc finger spans residues 191–232 (CNICHSLLIQGQSCETCGIRMHLPCVAKYFQSNAEPRCPHCN). Residues 246–266 (EKERESGVLKSNKKSLRSRQH) form a disordered region. Residue Ser251 is modified to Phosphoserine. Positions 256 to 266 (SNKKSLRSRQH) are enriched in basic residues.

It belongs to the NSE1 family. In terms of assembly, component of the SMC5-SMC6 complex which consists at least of SMC5, SMC6, NSMCE2, NSMCE1, NSMCE4A or EID3 and NSMCE3. NSMCE1, NSMCE4A or EID3 and NSMCE3 probably form a subcomplex that bridges the head domains of the SMC5-SMC6 heterodimer. Interacts with NSMCE3. Interacts with MAGEF1. Post-translationally, ubiquitinated.

Its subcellular location is the nucleus. It localises to the chromosome. It is found in the telomere. The enzyme catalyses S-ubiquitinyl-[E2 ubiquitin-conjugating enzyme]-L-cysteine + [acceptor protein]-L-lysine = [E2 ubiquitin-conjugating enzyme]-L-cysteine + N(6)-ubiquitinyl-[acceptor protein]-L-lysine.. Functionally, RING-type zinc finger-containing E3 ubiquitin ligase that assembles with melanoma antigen protein (MAGE) to catalyze the direct transfer of ubiquitin from E2 ubiquitin-conjugating enzyme to a specific substrate. Within MAGE-RING ubiquitin ligase complex, MAGE stimulates and specifies ubiquitin ligase activity likely through recruitment and/or stabilization of the E2 ubiquitin-conjugating enzyme at the E3:substrate complex. Involved in maintenance of genome integrity, DNA damage response and DNA repair. NSMCE3/MAGEG1 and NSMCE1 ubiquitin ligase are components of SMC5-SMC6 complex and may positively regulate homologous recombination-mediated DNA repair. MAGEF1-NSMCE1 ubiquitin ligase promotes proteasomal degradation of MMS19, a key component of the cytosolic iron-sulfur protein assembly (CIA) machinery. Down-regulation of MMS19 impairs the activity of several DNA repair and metabolism enzymes such as ERCC2/XPD, FANCJ, RTEL1 and POLD1 that require iron-sulfur clusters as cofactors. The chain is Non-structural maintenance of chromosomes element 1 homolog from Homo sapiens (Human).